The following is a 406-amino-acid chain: Putative sodium-coupled neutral amino acid transporter 11 (406 aa).

Over 1 to 7 (MKQAGFP) the chain is Cytoplasmic. Residues 8-28 (LGILLLFWVSYVTDFSLVLLI) form a helical membrane-spanning segment. An N-linked (GlcNAc...) asparagine glycan is attached at asparagine 44. Helical transmembrane passes span 48–68 (GFPGYLLLSVLQFLYPFIAMI), 93–113 (VFIGRHFIIGLSTVTFTLPLS), 121–141 (LGKVSLISTGLTTLILGIVMA), 156–176 (AWVFAKPNAIQAVGVMSFAFI), 202–222 (MSIVISVFICIFFATCGYLTF), and 241–263 (VTFGRFCYGVTVILTYPMECFVT). Asparagine 275 carries N-linked (GlcNAc...) asparagine glycosylation. A run of 3 helical transmembrane segments spans residues 279-299 (VFHIVVTVMVITVATLVSLLI), 301-321 (CLGIVLELNGVLCATPLIFII), and 340-360 (IMSCVMLPIGAVVMVFGFVMA).

Belongs to the amino acid/polyamine transporter 2 family.

It localises to the membrane. In terms of biological role, putative sodium-dependent amino acid/proton antiporter. This Homo sapiens (Human) protein is Putative sodium-coupled neutral amino acid transporter 11 (SLC38A11).